The following is a 103-amino-acid chain: Small ribosomal subunit protein uS10 (103 aa).

It belongs to the universal ribosomal protein uS10 family. Part of the 30S ribosomal subunit.

Its function is as follows. Involved in the binding of tRNA to the ribosomes. The chain is Small ribosomal subunit protein uS10 from Alkalilimnicola ehrlichii (strain ATCC BAA-1101 / DSM 17681 / MLHE-1).